Here is a 21-residue protein sequence, read N- to C-terminus: Preblooming protein 2 (21 aa).

Its function is as follows. Possible mediator for cell division in the blooming process. The chain is Preblooming protein 2 from Prorocentrum triestinum (Red tide alga).